We begin with the raw amino-acid sequence, 469 residues long: Diaminobutyrate--2-oxoglutarate transaminase (469 aa).

Residue Lys290 is modified to N6-(pyridoxal phosphate)lysine.

It belongs to the class-III pyridoxal-phosphate-dependent aminotransferase family. The cofactor is pyridoxal 5'-phosphate.

The protein localises to the cytoplasm. The catalysed reaction is L-2,4-diaminobutanoate + 2-oxoglutarate = L-aspartate 4-semialdehyde + L-glutamate. Functionally, involved in the degradation of ectoine, which allows H.elongata to utilize ectoine as both a carbon and a nitrogen source for growth. Probably catalyzes the conversion of L-2,4-diaminobutyrate (DABA) to L-aspartate beta-semialdehyde (ASA) by transamination with 2-oxoglutarate. The protein is Diaminobutyrate--2-oxoglutarate transaminase of Halomonas elongata (strain ATCC 33173 / DSM 2581 / NBRC 15536 / NCIMB 2198 / 1H9).